The sequence spans 522 residues: Protein nucleotidyltransferase YdiU (522 aa).

ATP-binding residues include Gly109, Gly111, Arg112, Lys132, Asp144, Gly145, Arg195, and Arg202. Residue Asp271 is the Proton acceptor of the active site. Residues Asn272 and Asp281 each contribute to the Mg(2+) site. An ATP-binding site is contributed by Asp281.

The protein belongs to the SELO family. It depends on Mg(2+) as a cofactor. Mn(2+) serves as cofactor.

The catalysed reaction is L-seryl-[protein] + ATP = 3-O-(5'-adenylyl)-L-seryl-[protein] + diphosphate. It catalyses the reaction L-threonyl-[protein] + ATP = 3-O-(5'-adenylyl)-L-threonyl-[protein] + diphosphate. It carries out the reaction L-tyrosyl-[protein] + ATP = O-(5'-adenylyl)-L-tyrosyl-[protein] + diphosphate. The enzyme catalyses L-histidyl-[protein] + UTP = N(tele)-(5'-uridylyl)-L-histidyl-[protein] + diphosphate. The catalysed reaction is L-seryl-[protein] + UTP = O-(5'-uridylyl)-L-seryl-[protein] + diphosphate. It catalyses the reaction L-tyrosyl-[protein] + UTP = O-(5'-uridylyl)-L-tyrosyl-[protein] + diphosphate. Nucleotidyltransferase involved in the post-translational modification of proteins. It can catalyze the addition of adenosine monophosphate (AMP) or uridine monophosphate (UMP) to a protein, resulting in modifications known as AMPylation and UMPylation. The protein is Protein nucleotidyltransferase YdiU of Burkholderia orbicola (strain MC0-3).